The chain runs to 433 residues: Myricetin 3-O-glucosyl 1,2-rhamnoside 6'-O-caffeoyltransferase AT2 (433 aa).

Residues His157 and Asp375 each act as proton acceptor in the active site.

The protein belongs to the plant acyltransferase family. In terms of tissue distribution, expressed in young cromes.

The catalysed reaction is myricetin 3-O-[beta-D-glucosyl-(1-&gt;2)-alpha-L-rhamnoside] + (E)-caffeoyl-CoA = myricetin 3-O-[(6-O-(E)-caffeoyl-beta-D-glucosyl)-(1-&gt;2)-alpha-L-rhamnoside] + CoA. Its pathway is flavonoid metabolism. Its function is as follows. Caffeoyltransferase involved in montbretin A (MbA) biosynthesis. Catalyzes the caffeoylation of myricetin 3-O-beta-D-glucosyl 1,2-alpha-L-rhamnoside (MRG) to produce myricetin 3-O-(6'-O-caffeoyl)-beta-D-glucosyl 1,2-alpha-L-rhamnoside (mini-MbA), a precursor of MbA. Mini-MbA and MbA are potent inhibitors of human pancreatic alpha-amylase and are being developed as drug candidates to treat type-2 diabetes. In vitro, is able to catalyze the caffeoylation of quercetin 3-O-sophoroside (QGG), although QGG may not be a physiological substrate in vivo. In vitro, can use coumaryl-CoA, feruloyl-CoA and acetyl-CoA, although these three acyl donors may not be physiological in vivo. This chain is Myricetin 3-O-glucosyl 1,2-rhamnoside 6'-O-caffeoyltransferase AT2, found in Crocosmia x crocosmiiflora (Montbretia).